Here is a 240-residue protein sequence, read N- to C-terminus: MAQEIEKTNNDHLVQSSDPEHPANLIPELCRKFYNWGWVTGTGGGTSIRRGDHIFIAPSGVQKELIQPHNIFVLEFPTPKYPPSDRKYIRKPLELKPSACTPLFLTAFERGAGCCIHTHSQWAVLVTLLVEREKGPDACFEISNIEQIKGIPRGKGKGMLGFFDTLRIPIIENTAFEEDLTESLEKAMDQYPDTYAVLVRRHGIYVWGDDVAKAKTQCESLDYLFQLAVEMHKLGLPWVK.

The span at M1–N10 shows a compositional bias: basic and acidic residues. The interval M1–E20 is disordered. Substrate is bound at residue C100. The Zn(2+) site is built by H117 and H119. E146 (proton donor/acceptor) is an active-site residue. H202 is a binding site for Zn(2+).

The protein belongs to the aldolase class II family. MtnB subfamily. Requires Zn(2+) as cofactor.

It is found in the cytoplasm. It carries out the reaction 5-(methylsulfanyl)-D-ribulose 1-phosphate = 5-methylsulfanyl-2,3-dioxopentyl phosphate + H2O. The protein operates within amino-acid biosynthesis; L-methionine biosynthesis via salvage pathway; L-methionine from S-methyl-5-thio-alpha-D-ribose 1-phosphate: step 2/6. Catalyzes the dehydration of methylthioribulose-1-phosphate (MTRu-1-P) into 2,3-diketo-5-methylthiopentyl-1-phosphate (DK-MTP-1-P). This Aspergillus fumigatus (strain CBS 144.89 / FGSC A1163 / CEA10) (Neosartorya fumigata) protein is Methylthioribulose-1-phosphate dehydratase.